Consider the following 160-residue polypeptide: Large ribosomal subunit protein eL21 (160 aa).

Composition is skewed to basic and acidic residues over residues 112–123 (NDQKKKEAKEKG) and 136–146 (REAHFVRTNGK). The interval 112–146 (NDQKKKEAKEKGTWVQLNGQPAPPREAHFVRTNGK) is disordered.

The protein belongs to the eukaryotic ribosomal protein eL21 family. In terms of assembly, component of the large ribosomal subunit.

The protein localises to the cytoplasm. It localises to the cytosol. Its subcellular location is the endoplasmic reticulum. Functionally, component of the large ribosomal subunit. The ribosome is a large ribonucleoprotein complex responsible for the synthesis of proteins in the cell. The chain is Large ribosomal subunit protein eL21 (Rpl21) from Rattus norvegicus (Rat).